The primary structure comprises 230 residues: Ubiquitin carboxyl-terminal hydrolase isozyme L3 (230 aa).

In terms of domain architecture, UCH catalytic spans 5-229; the sequence is RWLPLEANPE…LRFNAIALSA (225 aa). The segment at 8-13 is interaction with ubiquitin; it reads PLEANP. C95 acts as the Nucleophile in catalysis. S130 bears the Phosphoserine mark. Residues 152–159 form an interaction with ubiquitin. Crossover loop which restricts access of large ubiquitin adducts to the active site region; sequence AHEGQTEA. H169 functions as the Proton donor in the catalytic mechanism. The tract at residues 219–224 is interaction with ubiquitin; that stretch reads ELRFNA.

It belongs to the peptidase C12 family. As to quaternary structure, preferentially binds diubiquitin; the interaction does not hydrolyze diubiquitin but, in vitro, inhibits the hydrolyzing activity on other substrates.

Its subcellular location is the cytoplasm. It catalyses the reaction Thiol-dependent hydrolysis of ester, thioester, amide, peptide and isopeptide bonds formed by the C-terminal Gly of ubiquitin (a 76-residue protein attached to proteins as an intracellular targeting signal).. With respect to regulation, inhibited by monoubiquitin and diubiquitin. In terms of biological role, deubiquitinating enzyme (DUB) that controls levels of cellular ubiquitin through processing of ubiquitin precursors and ubiquitinated proteins. Thiol protease that recognizes and hydrolyzes a peptide bond at the C-terminal glycine of either ubiquitin or NEDD8. Has a 10-fold preference for Arg and Lys at position P3''. Deubiquitinates ENAC in apical compartments, thereby regulating apical membrane recycling. Indirectly increases the phosphorylation of IGFIR, AKT and FOXO1 and promotes insulin-signaling and insulin-induced adipogenesis. Required for stress-response retinal, skeletal muscle and germ cell maintenance. May be involved in working memory. Can hydrolyze UBB(+1), a mutated form of ubiquitin which is not effectively degraded by the proteasome. The polypeptide is Ubiquitin carboxyl-terminal hydrolase isozyme L3 (UCHL3) (Bos taurus (Bovine)).